The primary structure comprises 176 residues: Nucleoside triphosphate/diphosphate phosphatase (176 aa).

Arg-23 serves as the catalytic Proton donor. Asn-87, Asp-103, Asp-105, Asp-107, Asp-120, and Glu-123 together coordinate Mg(2+).

This sequence belongs to the Ntdp family. Mg(2+) serves as cofactor.

The catalysed reaction is a ribonucleoside 5'-triphosphate + H2O = a ribonucleoside 5'-diphosphate + phosphate + H(+). It carries out the reaction a ribonucleoside 5'-diphosphate + H2O = a ribonucleoside 5'-phosphate + phosphate + H(+). Its function is as follows. Has nucleoside phosphatase activity towards nucleoside triphosphates and nucleoside diphosphates. The sequence is that of Nucleoside triphosphate/diphosphate phosphatase (yjjG) from Lactococcus lactis subsp. lactis (strain IL1403) (Streptococcus lactis).